The primary structure comprises 490 residues: Glutathione hydrolase 6 (490 aa).

Topologically, residues 1 to 52 are cytoplasmic; that stretch reads MEPEAGPVLYQKLRVWEPSLESEEEEEEISEQLILDASGPHDSSGNKAGRLP. The helical; Signal-anchor for type II membrane protein transmembrane segment at 53 to 73 threads the bilayer; it reads GAWAQLVAALLLLAIGFSLAV. The Extracellular segment spans residues 74-490; it reads RQLCSSGASP…PSGCCPFQGF (417 aa). N-linked (GlcNAc...) asparagine glycosylation is found at Asn160, Asn165, and Asn374.

It belongs to the gamma-glutamyltransferase family. Heterodimer composed of the light and heavy chains. The active site is located in the light chain. Cleaved by autocatalysis into a large and a small subunit and the autocatalytic cleavage is essential to the functional activation of the enzyme.

Its subcellular location is the membrane. The enzyme catalyses an N-terminal (5-L-glutamyl)-[peptide] + an alpha-amino acid = 5-L-glutamyl amino acid + an N-terminal L-alpha-aminoacyl-[peptide]. It catalyses the reaction glutathione + H2O = L-cysteinylglycine + L-glutamate. It carries out the reaction an S-substituted glutathione + H2O = an S-substituted L-cysteinylglycine + L-glutamate. The protein operates within sulfur metabolism; glutathione metabolism. In terms of biological role, hydrolyzes and transfers gamma-glutamyl moieties from glutathione and other gamma-glutamyl compounds to acceptors. The sequence is that of Glutathione hydrolase 6 from Bos taurus (Bovine).